A 131-amino-acid chain; its full sequence is Ribosome-binding factor A (131 aa).

The protein belongs to the RbfA family. As to quaternary structure, monomer. Binds 30S ribosomal subunits, but not 50S ribosomal subunits or 70S ribosomes.

The protein resides in the cytoplasm. In terms of biological role, one of several proteins that assist in the late maturation steps of the functional core of the 30S ribosomal subunit. Associates with free 30S ribosomal subunits (but not with 30S subunits that are part of 70S ribosomes or polysomes). Required for efficient processing of 16S rRNA. May interact with the 5'-terminal helix region of 16S rRNA. This is Ribosome-binding factor A from Vibrio vulnificus (strain CMCP6).